The sequence spans 120 residues: MPEEDLVELKFRLYDGSDVGPFQYSPTATVSMLKERIVSEWPKDKKIVPKSASDIKLINAGKILENGKTVAQCKAPFDDLPKSVITMHVVVQLSPTKARPEKKIEKEEAPQRSFCSCTIM.

The Ubiquitin-like domain maps to 7–73 (VELKFRLYDG…LENGKTVAQC (67 aa)). A lipid anchor (S-palmitoyl cysteine) is attached at cysteine 115. Cysteine 117 bears the Cysteine methyl ester mark. The S-farnesyl cysteine moiety is linked to residue cysteine 117. The propeptide at 118 to 120 (TIM) is removed in mature form.

As to expression, ubiquitous.

It is found in the cell membrane. May serve as docking site to facilitate the association of other proteins to the plasma membrane. The chain is Membrane-anchored ubiquitin-fold protein 4 (MUB4) from Arabidopsis thaliana (Mouse-ear cress).